Reading from the N-terminus, the 438-residue chain is Keratin, type I cytoskeletal 18 (438 aa).

Positions 4-83 (AVSSRSTVVS…TLSGNAVISN (80 aa)) are head. Residues 84–119 (EKETMQDLNDRLSNYLETVRRLENANQQLEIQIREA) form a coil 1A region. The IF rod domain occupies 84–395 (EKETMQDLND…HLLGGEDSDT (312 aa)). The segment at 120 to 136 (MEKRGPSVRDYSNYEKI) is linker 1. The tract at residues 137 to 228 (IKELRDQIYD…KNHEDEVIAL (92 aa)) is coil 1B. A linker 12 region spans residues 229–252 (RNQVNSCGVQVDLDAPKGTDLAEI). Residues 253-393 (MATLRAEYEA…YRHLLGGEDS (141 aa)) are coil 2. The segment at 394 to 438 (DTLSLQDALSAMKVSNVQTVQKIVVTTQKLVDGKVVEDSTVTETK) is tail.

Belongs to the intermediate filament family. Heterotetramer of two type I and two type II keratins. Keratin-18 associates with keratin-8. In terms of processing, phosphorylated. Proteolytically cleaved by caspases during epithelial cell apoptosis. In terms of tissue distribution, expressed at low levels in skin.

Functionally, when phosphorylated, plays a role in filament reorganization. In Protopterus aethiopicus (Marbled lungfish), this protein is Keratin, type I cytoskeletal 18.